The chain runs to 138 residues: Protein FAM216B (138 aa).

It belongs to the FAM216 family.

The chain is Protein FAM216B (Fam216b) from Mus musculus (Mouse).